Reading from the N-terminus, the 148-residue chain is Proteasome chaperone 4 (148 aa).

Belongs to the PSMG4 family. Component of the 20S proteasome chaperone. Forms a heterodimer with IRC25 that binds to proteasome precursors. Interacts with POP2.

It is found in the cytoplasm. Functionally, involved in 20S proteasome assembly, facilitating the alpha-ring formation. Involved in maintenance of telomere length. This is Proteasome chaperone 4 (POC4) from Saccharomyces cerevisiae (strain ATCC 204508 / S288c) (Baker's yeast).